The chain runs to 179 residues: MSRIGKRPIPVPAGVTVAIDGSAVTVKGPKGELSRVLPADIVVSQEGAELLVKRPSDEERHKALHGLTRTLVANMVEGVTTGFKRVLEITGVGYKAEIKPYGALLSLGFSHQIEYKAPQGVQITAPNPTTVVIEGASKEHVGQVAAEIRSLRKPEPYKGKGVKYQGEVVRRKAGKAGGK.

Belongs to the universal ribosomal protein uL6 family. Part of the 50S ribosomal subunit.

In terms of biological role, this protein binds to the 23S rRNA, and is important in its secondary structure. It is located near the subunit interface in the base of the L7/L12 stalk, and near the tRNA binding site of the peptidyltransferase center. In Gemmatimonas aurantiaca (strain DSM 14586 / JCM 11422 / NBRC 100505 / T-27), this protein is Large ribosomal subunit protein uL6.